A 78-amino-acid chain; its full sequence is U7-lycotoxin-Ls1e (78 aa).

Positions 1–22 (MKLIIFTGLALLLIVSLIDVEA) are cleaved as a signal peptide. The propeptide occupies 23 to 26 (QNEG).

The protein belongs to the neurotoxin 19 (CSTX) family. 07 (U7-Lctx) subfamily. In terms of processing, contains 4 disulfide bonds. As to expression, expressed by the venom gland.

The protein localises to the secreted. The polypeptide is U7-lycotoxin-Ls1e (Lycosa singoriensis (Wolf spider)).